The primary structure comprises 332 residues: MIEVPPFWCPLPIAIHPAADQAEKDARAWAERYGVRLRIADQVQPGRLGAYWAPHGTYEGMLAVGCWNFWAFAFDDHLDEPLPLDVPVTTSLVQQAVDIPSPPITDDPWAAGAQAVFNMFRDLATPTQVRYCADNHRRWLHGACWRHSNHVNRRLPPLAEYIPLRMQDAAAQATCLIAVLIGSDISVPEQEMDSPRVRALLETASWTATIDSDLHSFQLEDTQRPVSQHIVSVLMHERGIGVDEALRQSVALRDRFMTRFLHLQQECARTGSSELARFAHTLGYVISGYLQWAVDTSRYGQTEATFSFTDTPRDDTPEPPPGIPSVEWLWTL.

Residues aspartate 75 and glutamate 80 each coordinate Mg(2+). The short motif at 75–80 (DDHLDE) is the DDXXXE motif element. Arginine 165 contacts substrate. Serine 212, serine 216, and glutamate 220 together coordinate Mg(2+). An SXXXSXXXE motif motif is present at residues 212 to 220 (SDLHSFQLE). Position 298–299 (298–299 (RY)) interacts with substrate.

This sequence belongs to the terpene synthase family. Requires Mg(2+) as cofactor.

The catalysed reaction is (2E,6E,10E)-geranylgeranyl diphosphate = tsukubadiene + diphosphate. In terms of biological role, catalyzes the formation of the 5-9-5 ring skeleton (3S,6S,11R,14S)-tsukubadiene from geranylgeranyl diphosphate (GGPP) via a 1,11-cyclization and a 10Re,14Re-cyclization. The protein is Tsukubadiene synthase of Streptomyces tsukubensis (strain DSM 42081 / NBRC 108919 / NRRL 18488 / 9993).